The following is a 632-amino-acid chain: Chaperone protein HtpG (632 aa).

The interval 1–339 (MTQQTMSFQA…SSDLPLNVSR (339 aa)) is a; substrate-binding. Residues 340-559 (EILQESRDVK…DNDMSGYLQR (220 aa)) form a b region. A c region spans residues 560–632 (MLKAAGQSAP…TNALLLSRAA (73 aa)).

It belongs to the heat shock protein 90 family. As to quaternary structure, homodimer.

Its subcellular location is the cytoplasm. In terms of biological role, molecular chaperone. Has ATPase activity. In Burkholderia pseudomallei (strain 668), this protein is Chaperone protein HtpG.